Here is an 883-residue protein sequence, read N- to C-terminus: Copper-transporting ATPase PAA2, chloroplastic (883 aa).

The transit peptide at 1 to 65 (MASNLLRFPL…TQSFESTESS (65 aa)) directs the protein to the chloroplast. One can recognise an HMA domain in the interval 76 to 146 (TPILLDVSGM…RLTESGFEAK (71 aa)). Cu cation is bound by residues cysteine 87 and cysteine 90. The next 6 membrane-spanning stretches (helical) occupy residues 179-199 (VAFAWTLVALCCGSHTSHILH), 209-229 (GIWDLLHNSYVKGGLAVGALL), 250-270 (MNSLVGLGSMAAFSISLISLV), 274-294 (LEWDASFFDEPVMLLGFVLLG), 445-465 (AIAGPFVYTIMSLSAMTFAFW), and 499-519 (VLVVSCPCALGLATPTAILIG). The 4-aspartylphosphate intermediate role is filled by aspartate 548. ATP is bound at residue 761 to 768 (GDGINDAP). Residues aspartate 762 and aspartate 766 each contribute to the Mg(2+) site. A run of 2 helical transmembrane segments spans residues 822–842 (LAWAIAYNVISIPIAAGVLLP) and 846–866 (FAMTPSLSGGLMALSSIFVVS).

This sequence belongs to the cation transport ATPase (P-type) (TC 3.A.3) family. Type IB subfamily. Expressed in the shoots only and not in the roots.

The protein localises to the plastid. It localises to the chloroplast thylakoid membrane. The enzyme catalyses Cu(2+)(in) + ATP + H2O = Cu(2+)(out) + ADP + phosphate + H(+). Functionally, mediates copper transfer across the chloroplast thylakoid membrane. Required for copper delivery into the thylakoids lumen, which is essential for the function of copper proteins. The polypeptide is Copper-transporting ATPase PAA2, chloroplastic (PAA2) (Arabidopsis thaliana (Mouse-ear cress)).